Consider the following 335-residue polypeptide: Phosphoserine phosphatase RsbU (335 aa).

The region spanning 123 to 333 is the PPM-type phosphatase domain; the sequence is DIGAISVPAK…DDFTLIVLRR (211 aa).

It catalyses the reaction O-phospho-L-serine + H2O = L-serine + phosphate. The catalysed reaction is O-phospho-D-serine + H2O = D-serine + phosphate. With respect to regulation, stimulated by a long-lived interaction with RsbT. In terms of biological role, positive regulator of sigma-B activity. Dephosphorylates RsbV in response to environmental stress conveyed from the RsbXST module. This is Phosphoserine phosphatase RsbU (rsbU) from Bacillus subtilis (strain 168).